The sequence spans 304 residues: Ornithine carbamoyltransferase (304 aa).

Carbamoyl phosphate contacts are provided by residues 53 to 56 (STRT), Gln80, Arg104, and 131 to 134 (HPCQ). Residues Asn162, Asp222, and 226–227 (SM) each bind L-ornithine. Carbamoyl phosphate-binding positions include 261 to 262 (CL) and Arg289.

This sequence belongs to the aspartate/ornithine carbamoyltransferase superfamily. OTCase family.

The protein localises to the cytoplasm. The catalysed reaction is carbamoyl phosphate + L-ornithine = L-citrulline + phosphate + H(+). It functions in the pathway amino-acid biosynthesis; L-arginine biosynthesis; L-arginine from L-ornithine and carbamoyl phosphate: step 1/3. In terms of biological role, reversibly catalyzes the transfer of the carbamoyl group from carbamoyl phosphate (CP) to the N(epsilon) atom of ornithine (ORN) to produce L-citrulline. This Rhizobium johnstonii (strain DSM 114642 / LMG 32736 / 3841) (Rhizobium leguminosarum bv. viciae) protein is Ornithine carbamoyltransferase.